The primary structure comprises 695 residues: ATP-dependent permease MDL1, mitochondrial (695 aa).

A mitochondrion-targeting transit peptide spans 1 to 100 (MIVRMIRLCK…RLFVLSKPES (100 aa)). Helical transmembrane passes span 103–123 (IGLA…VPSV), 156–176 (FTAL…RIII), 242–262 (FVGF…MMIL), 337–357 (GLFF…LLLV), and 372–392 (LSSF…LSSF). The 296-residue stretch at 103–398 (IGLALLLILI…LSSFYSELMK (296 aa)) folds into the ABC transmembrane type-1 domain. In terms of domain architecture, ABC transporter spans 432–673 (IVFKNVSFTY…PNSELNALLA (242 aa)). 467–474 (GPSGSGKS) is an ATP binding site.

It belongs to the ABC transporter superfamily. ABCB family. Mitochondrial peptide exporter (TC 3.A.1.212) subfamily.

It is found in the mitochondrion inner membrane. Its function is as follows. Mediates export of peptides with molecular masses of 2100 to 600 daltons generated upon proteolysis of mitochondrial inner membrane proteins. The sequence is that of ATP-dependent permease MDL1, mitochondrial (MDL1) from Saccharomyces cerevisiae (strain ATCC 204508 / S288c) (Baker's yeast).